The sequence spans 386 residues: Putative 8-amino-7-oxononanoate synthase (386 aa).

R22 is a binding site for substrate. G109 to Y110 lines the pyridoxal 5'-phosphate pocket. Substrate is bound at residue H134. Pyridoxal 5'-phosphate-binding positions include S182, D207 to H210, and T238 to K241. K241 carries the N6-(pyridoxal phosphate)lysine modification. A substrate-binding site is contributed by T356.

It belongs to the class-II pyridoxal-phosphate-dependent aminotransferase family. BioF subfamily. Homodimer. The cofactor is pyridoxal 5'-phosphate.

It carries out the reaction 6-carboxyhexanoyl-[ACP] + L-alanine + H(+) = (8S)-8-amino-7-oxononanoate + holo-[ACP] + CO2. It functions in the pathway cofactor biosynthesis; biotin biosynthesis. In terms of biological role, catalyzes the decarboxylative condensation of pimeloyl-[acyl-carrier protein] and L-alanine to produce 8-amino-7-oxononanoate (AON), [acyl-carrier protein], and carbon dioxide. This is Putative 8-amino-7-oxononanoate synthase (bioF) from Nostoc sp. (strain PCC 7120 / SAG 25.82 / UTEX 2576).